The sequence spans 527 residues: Serine/threonine-protein kinase NLK (527 aa).

2 sufficient for interaction with DAPK3 regions span residues 1 to 125 (MSLC…KAHH) and 124 to 416 (HHHQ…SKRI). 2 required for interaction with TAB2 regions span residues 1-304 (MSLC…VVTQ) and 434-527 (YHTC…LVWE). 2 disordered regions span residues 22–72 (AAAA…SSAA) and 90–140 (QQPY…DIEP). Residues 26–54 (GHHHHHHHHLPHLPPPHLHHHHHPQHHLH) are compositionally biased toward basic residues. Over residues 103-119 (PGPAAAAPAQVQAAAAA) the composition is skewed to low complexity. Over residues 122 to 131 (KAHHHQHSHH) the composition is skewed to basic residues. The Protein kinase domain maps to 138 to 427 (IEPDRPIGYG…AKDALAHPYL (290 aa)). Residues 144-152 (IGYGAFGVV) and Lys167 contribute to the ATP site. Asp264 (proton acceptor) is an active-site residue. Thr298 bears the Phosphothreonine; by autocatalysis mark. Positions 298–300 (TQE) match the TQE motif. The required for homodimerization and kinase activation and localization to the nucleus stretch occupies residues 428-527 (DEGRLRYHTC…EMPPSPLVWE (100 aa)). Position 522 is a phosphoserine (Ser522).

This sequence belongs to the protein kinase superfamily. CMGC Ser/Thr protein kinase family. MAP kinase subfamily. As to quaternary structure, homodimer. Homodimerization is required for intermolecular autophosphorylation, kinase activation and nuclear localization. May interact with components of cullin-RING-based SCF (SKP1-CUL1-F-box protein) E3 ubiquitin-protein ligase complexes. Interacts with LEF1, MEF2A, MYBL1 and MYBL2. Interacts with the upstream activating kinases HIPK2 and MAP3K7/TAK1. Interaction with MAP3K7/TAK1 seems to be indirect, and may be mediated by other proteins such as STAT3, TAB1 and TAB2. Interacts with and phosphorylates a number of transcription factors including FOXO1, FOXO3, FOXO4, MYB, NOTCH1 and TCF7L2/TCF4. Interacts with DAPK3/ZIPK, and this interaction may disrupt interaction with transcription factors such as TCF7L2/TCF4. Interacts with RNF138/NARF. Interacts with ATF5; the interaction stabilizes ATF5 at the protein level in a kinase-independent manner. Mg(2+) serves as cofactor. In terms of processing, phosphorylated on Thr-298. Intermolecular autophosphorylation on Thr-298 activates the enzyme.

Its subcellular location is the nucleus. The protein localises to the cytoplasm. It catalyses the reaction L-seryl-[protein] + ATP = O-phospho-L-seryl-[protein] + ADP + H(+). The catalysed reaction is L-threonyl-[protein] + ATP = O-phospho-L-threonyl-[protein] + ADP + H(+). With respect to regulation, activated by dimerization and subsequent intermolecular autophosphorylation on Thr-298. Activated by the non-canonical Wnt signaling pathway, in which WNT5A treatment leads to activation of MAP3K7/TAK1 and HIPK2, which subsequently phosphorylates and activates this protein. Other cytokines such as IL6 may also activate this regulatory circuit. Functionally, serine/threonine-protein kinase that regulates a number of transcription factors with key roles in cell fate determination. Positive effector of the non-canonical Wnt signaling pathway, acting downstream of WNT5A, MAP3K7/TAK1 and HIPK2. Negative regulator of the canonical Wnt/beta-catenin signaling pathway. Binds to and phosphorylates TCF7L2/TCF4 and LEF1, promoting the dissociation of the TCF7L2/LEF1/beta-catenin complex from DNA, as well as the ubiquitination and subsequent proteolysis of LEF1. Together these effects inhibit the transcriptional activation of canonical Wnt/beta-catenin target genes. Negative regulator of the Notch signaling pathway. Binds to and phosphorylates NOTCH1, thereby preventing the formation of a transcriptionally active ternary complex of NOTCH1, RBPJ/RBPSUH and MAML1. Negative regulator of the MYB family of transcription factors. Phosphorylation of MYB leads to its subsequent proteolysis while phosphorylation of MYBL1 and MYBL2 inhibits their interaction with the coactivator CREBBP. Other transcription factors may also be inhibited by direct phosphorylation of CREBBP itself. Acts downstream of IL6 and MAP3K7/TAK1 to phosphorylate STAT3, which is in turn required for activation of NLK by MAP3K7/TAK1. Upon IL1B stimulus, cooperates with ATF5 to activate the transactivation activity of C/EBP subfamily members. Phosphorylates ATF5 but also stabilizes ATF5 protein levels in a kinase-independent manner. Acts as an inhibitor of the mTORC1 complex in response to osmotic stress by mediating phosphorylation of RPTOR, thereby preventing recruitment of the mTORC1 complex to lysosomes. The protein is Serine/threonine-protein kinase NLK (NLK) of Homo sapiens (Human).